Reading from the N-terminus, the 243-residue chain is Segregation and condensation protein A (243 aa).

The protein belongs to the ScpA family. In terms of assembly, component of a cohesin-like complex composed of ScpA, ScpB and the Smc homodimer, in which ScpA and ScpB bind to the head domain of Smc. The presence of the three proteins is required for the association of the complex with DNA.

It localises to the cytoplasm. Its function is as follows. Participates in chromosomal partition during cell division. May act via the formation of a condensin-like complex containing Smc and ScpB that pull DNA away from mid-cell into both cell halves. This Thermoanaerobacter pseudethanolicus (strain ATCC 33223 / 39E) (Clostridium thermohydrosulfuricum) protein is Segregation and condensation protein A.